The following is a 336-amino-acid chain: Cytoskeleton protein RodZ (336 aa).

Topologically, residues 1–111 (MNTEATHDQN…LGKRRKKRDG (111 aa)) are cytoplasmic. Residues 19 to 71 (LRNAREQLGLSQQAVAERLCLKVSTVRDIEEDKAPADLASTFLRGYIRSYARL) form the HTH cro/C1-type domain. Residues 30–49 (QQAVAERLCLKVSTVRDIEE) constitute a DNA-binding region (H-T-H motif). The helical; Signal-anchor for type II membrane protein transmembrane segment at 112-132 (WLMTFTWLVLFVVIGLSGAWW) threads the bilayer. The Periplasmic segment spans residues 133–336 (WQDHKAQQEE…TLNAEQSPAQ (204 aa)). The span at 148–164 (DQSSAELNNNQSQSVPL) shows a compositional bias: polar residues. Residues 148 to 245 (DQSSAELNNN…PLPTDQAGVT (98 aa)) form a disordered region. The segment covering 165-201 (DTSTTTDQAMATTPTSPVDTTATNTQTPAATTAPSPT) has biased composition (low complexity). Residues 202–217 (VDSQQNAVVPPSQANV) show a composition bias toward polar residues. A compositionally biased stretch (low complexity) spans 218-240 (DTAATPAPAATTTPDGAAPLPTD).

It belongs to the RodZ family.

Its subcellular location is the cell inner membrane. Functionally, cytoskeletal protein that is involved in cell-shape control through regulation of the length of the long axis. This Escherichia coli O7:K1 (strain IAI39 / ExPEC) protein is Cytoskeleton protein RodZ.